Here is a 576-residue protein sequence, read N- to C-terminus: Proline--tRNA ligase (576 aa).

It belongs to the class-II aminoacyl-tRNA synthetase family. ProS type 1 subfamily. In terms of assembly, homodimer.

It localises to the cytoplasm. It carries out the reaction tRNA(Pro) + L-proline + ATP = L-prolyl-tRNA(Pro) + AMP + diphosphate. Catalyzes the attachment of proline to tRNA(Pro) in a two-step reaction: proline is first activated by ATP to form Pro-AMP and then transferred to the acceptor end of tRNA(Pro). As ProRS can inadvertently accommodate and process non-cognate amino acids such as alanine and cysteine, to avoid such errors it has two additional distinct editing activities against alanine. One activity is designated as 'pretransfer' editing and involves the tRNA(Pro)-independent hydrolysis of activated Ala-AMP. The other activity is designated 'posttransfer' editing and involves deacylation of mischarged Ala-tRNA(Pro). The misacylated Cys-tRNA(Pro) is not edited by ProRS. The polypeptide is Proline--tRNA ligase (Leptospira borgpetersenii serovar Hardjo-bovis (strain JB197)).